Reading from the N-terminus, the 534-residue chain is Cytochrome c oxidase subunit 1 (534 aa).

Residues 16–36 (VLYFMLAIFSGMAGTAMSLII) traverse the membrane as a helical segment. Ca(2+) contacts are provided by glutamate 39, alanine 42, and glycine 44. Helical transmembrane passes span 57-77 (VLVV…ALIG), 101-121 (IAFW…LVES), 147-167 (AIFA…NFIV), 182-202 (LPLF…SLPV), 235-255 (LFYF…FGII), and 267-287 (VFGE…GFLV). Histidine 62 contributes to the Fe(II)-heme a binding site. Histidine 241 contributes to the Cu cation binding site. The 1'-histidyl-3'-tyrosine (His-Tyr) cross-link spans 241 to 245 (HPEVY). Residue tyrosine 245 participates in O2 binding. Cu cation contacts are provided by histidine 290 and histidine 291. A run of 2 helical transmembrane segments spans residues 310-330 (MIIA…IYGG) and 338-358 (MLYA…GVAL). The Mg(2+) site is built by histidine 368 and aspartate 369. The next 2 membrane-spanning stretches (helical) occupy residues 372–392 (YVVG…LFAG) and 414–434 (FWLI…LGIN). Histidine 376 serves as a coordination point for heme a3. Histidine 378 contributes to the Fe(II)-heme a binding site. Proline 441 is a binding site for Ca(2+). The helical transmembrane segment at 452–472 (YVASIGSFIATLSLFLFIYIL) threads the bilayer.

It belongs to the heme-copper respiratory oxidase family. As to quaternary structure, component of the cytochrome c oxidase (complex IV, CIV), a multisubunit enzyme composed of a catalytic core of 3 subunits and several supernumerary subunits. The complex exists as a monomer or a dimer and forms supercomplexes (SCs) in the inner mitochondrial membrane with ubiquinol-cytochrome c oxidoreductase (cytochrome b-c1 complex, complex III, CIII). Heme is required as a cofactor. It depends on Cu cation as a cofactor.

Its subcellular location is the mitochondrion inner membrane. The enzyme catalyses 4 Fe(II)-[cytochrome c] + O2 + 8 H(+)(in) = 4 Fe(III)-[cytochrome c] + 2 H2O + 4 H(+)(out). Its pathway is energy metabolism; oxidative phosphorylation. In terms of biological role, component of the cytochrome c oxidase, the last enzyme in the mitochondrial electron transport chain which drives oxidative phosphorylation. The respiratory chain contains 3 multisubunit complexes succinate dehydrogenase (complex II, CII), ubiquinol-cytochrome c oxidoreductase (cytochrome b-c1 complex, complex III, CIII) and cytochrome c oxidase (complex IV, CIV), that cooperate to transfer electrons derived from NADH and succinate to molecular oxygen, creating an electrochemical gradient over the inner membrane that drives transmembrane transport and the ATP synthase. Cytochrome c oxidase is the component of the respiratory chain that catalyzes the reduction of oxygen to water. Electrons originating from reduced cytochrome c in the intermembrane space (IMS) are transferred via the dinuclear copper A center (CU(A)) of subunit 2 and heme A of subunit 1 to the active site in subunit 1, a binuclear center (BNC) formed by heme A3 and copper B (CU(B)). The BNC reduces molecular oxygen to 2 water molecules using 4 electrons from cytochrome c in the IMS and 4 protons from the mitochondrial matrix. The chain is Cytochrome c oxidase subunit 1 (COXI) from Saccharomyces paradoxus (Yeast).